The sequence spans 645 residues: DNA mismatch repair protein MutL (645 aa).

Disordered stretches follow at residues 353–381 (RPEN…FGPQ) and 395–420 (QGEP…PTTG).

It belongs to the DNA mismatch repair MutL/HexB family.

Functionally, this protein is involved in the repair of mismatches in DNA. It is required for dam-dependent methyl-directed DNA mismatch repair. May act as a 'molecular matchmaker', a protein that promotes the formation of a stable complex between two or more DNA-binding proteins in an ATP-dependent manner without itself being part of a final effector complex. This Pseudomonas syringae pv. tomato (strain ATCC BAA-871 / DC3000) protein is DNA mismatch repair protein MutL.